The chain runs to 510 residues: MHVFFPLLFRPSPVLFIACAYIYIDIYIHCTRCTVVNITMSTNRVPNLDPDLNLNKEIWDLYSSAQKILPDSNRILNLSWRLHNRTSFHRINRIMQHSNSIMDFSASPFASGVNAAGPGNNDLDDTDTDNQQFFLSDMNLNGSSVFENVFDDDDDDDDVETHSIVHSDLLNDMDSASQRASHNASGFPNFLDTSCSSSFDDHFIFTNNLPFLNNNSINNNHSHNSSHNNNSPSIANNTNANTNTNTSASTNTNSPLLRRNPSPSIVKPGSRRNSSVRKKKPALKKIKSSTSVQSSATPPSNTSSNPDIKCSNCTTSTTPLWRKDPKGLPLCNACGLFLKLHGVTRPLSLKTDIIKKRQRSSTKINNNITPPPSSSLNPGAAGKKKNYTASVAASKRKNSLNIVAPLKSQDIPIPKIASPSIPQYLRSNTRHHLSSSVPIEAETFSSFRPDMNMTMNMNLHNASTSSFNNEAFWKPLDSAIDHHSGDTNPNSNMNTTPNGNLSLDWLNLNL.

Ser167 bears the Phosphoserine mark. A compositionally biased stretch (low complexity) spans 220–256 (NHSHNSSHNNNSPSIANNTNANTNTNTSASTNTNSPL). 2 disordered regions span residues 220-311 (NHSH…IKCS) and 358-383 (QRSS…AAGK). Phosphoserine occurs at positions 262 and 270. A compositionally biased stretch (basic residues) spans 274-287 (SSVRKKKPALKKIK). The span at 294–306 (SSATPPSNTSSNP) shows a compositional bias: low complexity. The segment at 310–334 (CSNCTTSTTPLWRKDPKGLPLCNAC) adopts a GATA-type zinc-finger fold. Thr369 is subject to Phosphothreonine. Residues Ser399 and Ser418 each carry the phosphoserine modification.

It localises to the nucleus. Functionally, positive regulator of multiple nitrogen catabolic genes. The sequence is that of Transcriptional regulatory protein GAT1 (GAT1) from Saccharomyces cerevisiae (strain ATCC 204508 / S288c) (Baker's yeast).